A 197-amino-acid chain; its full sequence is Recombination protein RecR (197 aa).

Residues 56 to 71 (CSVCGNFDTIDPCAIC) form a C4-type zinc finger. The Toprim domain maps to 79–174 (SMLCVVEDVA…TVSGLAHGVP (96 aa)).

Belongs to the RecR family.

May play a role in DNA repair. It seems to be involved in an RecBC-independent recombinational process of DNA repair. It may act with RecF and RecO. The protein is Recombination protein RecR of Paramagnetospirillum magneticum (strain ATCC 700264 / AMB-1) (Magnetospirillum magneticum).